The chain runs to 671 residues: Kinesin-like protein KIF2C (671 aa).

Residues 1 to 200 (MIDFDDVAAI…CHPLTMTDPI (200 aa)) are globular. The disordered stretch occupies residues 36–62 (KQKRRSVNSKIPAPKESLRTRSTRMST). A Phosphoserine; by AURKB modification is found at Ser41. The short motif at 44–47 (SKIP) is the Microtubule tip localization signal element. 7 positions are modified to phosphoserine: Ser52, Ser57, Ser61, Ser112, Ser121, Ser133, and Ser138. The interval 153–184 (EKKAQNSEMRMKRAQEYDSSFPNWEFARMIKE) is negative regulator of microtubule-binding. 2 disulfide bridges follow: Cys191-Cys233 and Cys290-Cys506. The Kinesin motor domain maps to 204–534 (RICVCVRKRP…LRYADRVKEL (331 aa)). ATP is bound at residue 294 to 301 (GQTGSGKT). 3 positions are modified to phosphoserine: Ser465, Ser567, and Ser579. Residues 564–604 (GNLSKEEEELSSQMSSFNEAMTQIRELEERAVEELKEIIQQ) are a coiled coil.

The protein belongs to the TRAFAC class myosin-kinesin ATPase superfamily. Kinesin family. MCAK/KIF2 subfamily. As to quaternary structure, interacts with CENPH. Interacts with MTUS2/TIP150; the interaction is direct. Interacts with MAPRE1; the interaction is direct, regulated by phosphorylation and is probably required for targeting to growing microtubule plus ends. Interacts with KIF18B at microtubule tips; this interaction increases the affinity of both partners for microtubule plus ends and is required for robust microtubule depolymerization. Phosphorylation by AURKA or AURKB strongly reduces KIF18B-binding. Phosphorylation by AURKB, regulates association with centromeres and kinetochores and the microtubule depolymerization activity. Post-translationally, ubiquitinated.

The protein localises to the cytoplasm. The protein resides in the cytoskeleton. It localises to the nucleus. Its subcellular location is the chromosome. It is found in the centromere. The protein localises to the kinetochore. In terms of biological role, in complex with KIF18B, constitutes the major microtubule plus-end depolymerizing activity in mitotic cells. Regulates the turnover of microtubules at the kinetochore and functions in chromosome segregation during mitosis. Plays a role in chromosome congression and is required for the lateral to end-on conversion of the chromosome-microtubule attachment. The sequence is that of Kinesin-like protein KIF2C (KIF2C) from Macaca fascicularis (Crab-eating macaque).